A 648-amino-acid chain; its full sequence is Protein kinase YegI (648 aa).

Positions 15–302 (TTLGRELGKG…KAWVAALDSL (288 aa)) constitute a Protein kinase domain. ATP-binding positions include 21–29 (LGKGGEGAV) and lysine 41. Aspartate 143 serves as the catalytic Proton acceptor.

Autophosphorylated. Dephosphorylated by PphC.

Probable serine/threonine kinase. The protein is Protein kinase YegI (yegI) of Escherichia coli (strain K12).